The following is a 123-amino-acid chain: WAP four-disulfide core domain protein 5 (123 aa).

Positions 1-24 (MRIQSLLLLGALLAVGSQLPAVFG) are cleaved as a signal peptide. WAP domains lie at 27 to 73 (KGEK…CVPR) and 74 to 121 (VSVK…RDPA). 8 disulfides stabilise this stretch: Cys-34/Cys-62, Cys-41/Cys-66, Cys-49/Cys-61, Cys-55/Cys-70, Cys-81/Cys-109, Cys-88/Cys-113, Cys-96/Cys-108, and Cys-102/Cys-117.

The protein resides in the secreted. Its function is as follows. Putative acid-stable proteinase inhibitor. This is WAP four-disulfide core domain protein 5 (WFDC5) from Chlorocebus aethiops (Green monkey).